The following is a 262-amino-acid chain: Probable DNA polymerase sliding clamp 1 (262 aa).

Residues 67 to 86 mediate DNA binding; the sequence is KCEHTYELGVNVLNMFKLLR.

This sequence belongs to the PCNA family.

Sliding clamp subunit. Responsible for tethering the catalytic subunit of DNA polymerase to DNA during high-speed replication. The protein is Probable DNA polymerase sliding clamp 1 of Chlorella (PBCV-1).